The following is a 510-amino-acid chain: Catalase (510 aa).

The first 26 residues, 1–26, serve as a signal peptide directing secretion; that stretch reads MPLLNWSRHMVCLTAAGLITVPTVYA. Active-site residues include His-78 and Asn-150. Tyr-358 contacts heme. Residues 386–400 are compositionally biased toward polar residues; sequence NQDGALNTGHTTSGV. The tract at residues 386-412 is disordered; it reads NQDGALNTGHTTSGVNYEPSRLEPRPA.

The protein belongs to the catalase family. Heme is required as a cofactor.

It is found in the periplasm. The catalysed reaction is 2 H2O2 = O2 + 2 H2O. In terms of biological role, decomposes hydrogen peroxide into water and oxygen; serves to protect cells from the toxic effects of hydrogen peroxide. The chain is Catalase (katB) from Pseudomonas syringae pv. syringae.